The primary structure comprises 133 residues: MWNDLAVYIIRCSGPGTRVVEVGAGRFLYVSDYIRKHSKVDLVLTDIKPSHGGIVRDDITSPRMEIYRGAALIYSIRPPAEIHSSLMRVADAVGARLIIKPLTGEDIVTERKMKLVNYGRTYFYEYIAEVRSR.

This sequence belongs to the UPF0146 family.

In Methanothermobacter thermautotrophicus (strain ATCC 29096 / DSM 1053 / JCM 10044 / NBRC 100330 / Delta H) (Methanobacterium thermoautotrophicum), this protein is UPF0146 protein MTH_1000.